The following is a 289-amino-acid chain: Energy-coupling factor transporter ATP-binding protein EcfA2 (289 aa).

The ABC transporter domain occupies 3-246; sequence IEIKDVEHRY…KDDIAALGLD (244 aa). An ATP-binding site is contributed by 40 to 47; that stretch reads GHTGSGKS.

Belongs to the ABC transporter superfamily. Energy-coupling factor EcfA family. As to quaternary structure, forms a stable energy-coupling factor (ECF) transporter complex composed of 2 membrane-embedded substrate-binding proteins (S component), 2 ATP-binding proteins (A component) and 2 transmembrane proteins (T component).

It is found in the cell membrane. ATP-binding (A) component of a common energy-coupling factor (ECF) ABC-transporter complex. Unlike classic ABC transporters this ECF transporter provides the energy necessary to transport a number of different substrates. The protein is Energy-coupling factor transporter ATP-binding protein EcfA2 of Bacillus licheniformis (strain ATCC 14580 / DSM 13 / JCM 2505 / CCUG 7422 / NBRC 12200 / NCIMB 9375 / NCTC 10341 / NRRL NRS-1264 / Gibson 46).